The primary structure comprises 371 residues: NADP-dependent oxidoreductase lnaE (371 aa).

Residues 172–175 (DEIG), lysine 198, tyrosine 214, asparagine 237, 277–283 (YGTIAEQ), and 307–309 (FGL) contribute to the NADP(+) site.

Belongs to the NADP-dependent oxidoreductase L4BD family.

It participates in secondary metabolite biosynthesis. Functionally, NADP-dependent oxidoreductase; part of the lna gene cluster that mediates the biosynthesis of diastereomeric piperazines. Lna and lnb clusters encode sets of enzymes that produce overlapping sets of previously undescribed metabolites such as piperazinomycin-like metabolites or morpholine. The lna and lnb biosynthetic pathways appear to be part of a signaling network that controls the formation of sclerotia, a resilient overwintering structure. One primary function of the non-canonical nonribosomal peptide synthetases lnaA and lnbA consists in the reduction of L-tyrosine. The presence in the clusters of tailoring enzymes such as the oxidoreductases lnaB, lnbB, lnaE or lnbE, as well as of the cytochrome P450 monooxygenases lnaC, lnaD, or lnbC, might explain formation of various diastereomeric piperazines. The polypeptide is NADP-dependent oxidoreductase lnaE (Aspergillus flavus (strain ATCC 200026 / FGSC A1120 / IAM 13836 / NRRL 3357 / JCM 12722 / SRRC 167)).